Here is a 443-residue protein sequence, read N- to C-terminus: Diels-Alderase poxQ (443 aa).

Residues 1-23 form the signal peptide; it reads MARIPLEFLSITLPVLLLAYCLA. 3 N-linked (GlcNAc...) asparagine glycosylation sites follow: Asn-78, Asn-97, and Asn-145.

Belongs to the Diels-Alderase family.

It participates in secondary metabolite biosynthesis. Its function is as follows. Diels-Alderase; part of the gene cluster that mediates the biosynthesis of oxaleimides, cytotoxic compounds containing an unusual disubstituted succinimide moiety. The first step of the pathway is provided by the HR-PKS poxF that serves in a new mode of collaborative biosynthesis with the PKS-NRPS poxE, by providing the olefin containing amino acid substrate via the synthesis of an ACP-bound dec-4-enoate. The cytochrome P450 monooxygenase poxM-catalyzed oxidation at the alpha-position creates the enzyme-bound 2-hydroxydec-4-enoyl-ACP thioester, which may be prone to spontaneous hydrolysis to yield 2-hydroxydec-4-enoic acid due to increased electrophilicity of the carbonyl. 2-hydroxydec-4-enoic acid can then be further oxidized by poxM to yield the alpha-ketoacid 2-oxodec-4-enoicacid, which is reductively aminated by the aminotransferase poxL to yield (S,E)-2-aminodec-4-enoic acid. The Hybrid PKS-NRPS synthetase poxE then performs condensation between the octaketide product of its PKS modules and the amino group of (S,E)-2-aminodec-4-enoic acid which is activated and incorporated by the adenylation domain. The resulting aminoacyl product can be cyclized by the Diels-Alderase PoxQ and reductively released by the reductive (R) domain of poxE to yield an aldehyde intermediate. The released aldehyde is then substrate for a Knoevenagel condensation by the hydrolyase poxO followed by an oxidation at the 5-position of the pyrrolidone ring. The presence of the olefin from the amino acid building block allows for migration of the substituted allyl group to occur. This allylic transposition reaction takes place in a conjugate addition, semipinacol-like fashion to yield a succinimide intermediate. Iterative two-electron oxidations of the C7 methyl of the succinimide intermediate to the carboxylic acid can be catalyzed by one of two remaining cytochrome P450 monooxygenasess poxC or poxD to yield oxaleimide A. Subsequent oxidation yields the maleimide scaffold oxaleimide I. Both oxaleimide A and oxaleimide I can undergo oxidative modifications in the decalin ring to yield the series of products oxaleimides B to H. This Penicillium oxalicum protein is Diels-Alderase poxQ.